A 732-amino-acid chain; its full sequence is Polyribonucleotide nucleotidyltransferase (732 aa).

Mg(2+) is bound by residues Asp489 and Asp495. The region spanning 556 to 615 is the KH domain; sequence PKIDTIQIDVDKIKIVIGKGGETIDKIIAETGVKIDIDEEGLVQIFSSDQAAIDRTKEII. Positions 625–693 constitute an S1 motif domain; the sequence is GEVYHAKVVR…DKGRVDASMK (69 aa). A disordered region spans residues 691-732; sequence SMKALIPRPPKPEKKEEKASEAKEASNDQASKSQSETASEEK. Residues 700–716 show a composition bias toward basic and acidic residues; sequence PKPEKKEEKASEAKEAS. Polar residues predominate over residues 717–732; the sequence is NDQASKSQSETASEEK.

It belongs to the polyribonucleotide nucleotidyltransferase family. Requires Mg(2+) as cofactor.

It is found in the cytoplasm. The enzyme catalyses RNA(n+1) + phosphate = RNA(n) + a ribonucleoside 5'-diphosphate. Its function is as follows. Involved in mRNA degradation. Catalyzes the phosphorolysis of single-stranded polyribonucleotides processively in the 3'- to 5'-direction. The protein is Polyribonucleotide nucleotidyltransferase of Streptococcus uberis (strain ATCC BAA-854 / 0140J).